A 333-amino-acid chain; its full sequence is Transcription factor TGA2.2 (333 aa).

Over residues methionine 1–leucine 14 the composition is skewed to polar residues. Residues methionine 1 to glutamine 48 form a disordered region. Residues aspartate 37–glutamine 48 show a composition bias toward basic and acidic residues. Positions aspartate 47 to lysine 91 constitute a bZIP domain. The segment at lysine 49 to lysine 69 is basic motif. Residues leucine 75 to isoleucine 89 are leucine-zipper. A DOG1 domain is found at alanine 114–arginine 330.

The protein belongs to the bZIP family. In terms of assembly, interacts with NPR1/NH1. Interacts with NPR3/NH3.

It localises to the nucleus. Transcriptional regulator involved in defense response. The protein is Transcription factor TGA2.2 of Oryza sativa subsp. japonica (Rice).